A 146-amino-acid polypeptide reads, in one-letter code: Hemoglobin subunit beta (146 aa).

An N-acetylvaline modification is found at V1. Positions 2–146 (HLTDAEKALV…VATALAHKYH (145 aa)) constitute a Globin domain. T12 is modified (phosphothreonine). S44 is modified (phosphoserine). K59 bears the N6-acetyllysine mark. A heme b-binding site is contributed by H63. K82 carries the N6-acetyllysine modification. A heme b-binding site is contributed by H92. At C93 the chain carries S-nitrosocysteine. At K144 the chain carries N6-acetyllysine.

It belongs to the globin family. Heterotetramer of two alpha chains and two beta chains. In terms of tissue distribution, red blood cells.

Involved in oxygen transport from the lung to the various peripheral tissues. The protein is Hemoglobin subunit beta of Peromyscus crinitus (Canyon mouse).